The following is a 1417-amino-acid chain: DNA-directed RNA polymerase subunit beta' (1417 aa).

The Zn(2+) site is built by cysteine 68, cysteine 70, cysteine 83, and cysteine 86. Residues aspartate 458, aspartate 460, and aspartate 462 each coordinate Mg(2+). Residues cysteine 811, cysteine 884, cysteine 891, and cysteine 894 each coordinate Zn(2+).

Belongs to the RNA polymerase beta' chain family. In terms of assembly, the RNAP catalytic core consists of 2 alpha, 1 beta, 1 beta' and 1 omega subunit. When a sigma factor is associated with the core the holoenzyme is formed, which can initiate transcription. Mg(2+) serves as cofactor. It depends on Zn(2+) as a cofactor.

It carries out the reaction RNA(n) + a ribonucleoside 5'-triphosphate = RNA(n+1) + diphosphate. Its function is as follows. DNA-dependent RNA polymerase catalyzes the transcription of DNA into RNA using the four ribonucleoside triphosphates as substrates. This chain is DNA-directed RNA polymerase subunit beta', found in Francisella tularensis subsp. tularensis (strain FSC 198).